The chain runs to 218 residues: Oocyte-specific homeobox protein 7 (218 aa).

The span at 40–72 shows a compositional bias: polar residues; the sequence is SPLVTPGSTMQSSLSVPERNLLQQESEGPSRQS. A disordered region spans residues 40 to 77; it reads SPLVTPGSTMQSSLSVPERNLLQQESEGPSRQSGCMPL. The homeobox DNA-binding region spans 94–153; it reads FRKERIVYSKEQQRLLQKHFDECQYPKEKKIVELAVLIGVTKMEIKKWFKNNRAKYRQMN.

It belongs to the paired homeobox family. Obox subfamily. In terms of tissue distribution, specifically expressed in oocytes and early embryos.

The protein localises to the nucleus. Transcription factor required for zygotic genome activation (ZGA), a critical event in early embryonic development during which the developmental control passes from maternally provided mRNAs to the expression of the zygotic genome after fertilization. Together with other Obox family members, required in early two-cell stage embryos to kick-start the major ZGA wave by facilitating RNA Polymerase II 'pre-configuration', during which RNA Polymerase II relocates from the initial one-cell stage binding targets to ZGA gene promoters and distal enhancers. Mechanistically, promotes recruitment of RNA Polymerase II from (CG-rich) non-ZGA genes to (CG-poor) ZGA genes at the two-cell stage. Binds to regulatory DNA sequences containing a 5'-ACNCCTTTAATCCCAG-3' sequence motif. Most maternal and zygotic Obox family proteins can compensate for one another. In Mus musculus (Mouse), this protein is Oocyte-specific homeobox protein 7.